Here is a 238-residue protein sequence, read N- to C-terminus: MPPVKAPGNVSDCYFVGRVSLLKWISELLNEPVKKVEDLASGHHYCMALNLVYPGQVNMHRVRMNAINEWERSENFKIIQDVLSRNNIDKGIDVNKLVTGKYMDNFEFFQWFKWFFDQNYKGSKSGATESGSANAVTKTSKPGNRSGSTAASMQNPKASSTSGPSIDSKELEDLRRQIAKGQLESQFYFDKLHEIEIYMDQMNELMTQVEIAEPEDSPFYIKSVVKKIEDILYAEYHQ.

The Calponin-homology (CH) domain occupies 15 to 117 (FVGRVSLLKW…FFQWFKWFFD (103 aa)). Residues 101 to 238 (KYMDNFEFFQ…EDILYAEYHQ (138 aa)) form an interaction with aurora kinase region. Residues 124–165 (KSGATESGSANAVTKTSKPGNRSGSTAASMQNPKASSTSGPS) are compositionally biased toward polar residues. The tract at residues 124–169 (KSGATESGSANAVTKTSKPGNRSGSTAASMQNPKASSTSGPSIDSK) is disordered. Serine 148 carries the post-translational modification Phosphoserine. An EB1 C-terminal domain is found at 156–238 (PKASSTSGPS…EDILYAEYHQ (83 aa)).

Belongs to the MAPRE family. Homodimer; disulfide-linked and via interaction of the C-terminal EB1-specific domains. Interacts with BOP1 (via C-terminal WD repeats). Interacts with giardin subunit gamma, neurogenic locus notch homolog protein, GL50803_8358 and GL50803_11327. Interacts (via C-terminal residues 101-238) with aurora kinase. Interacts with tubulin gamma chain. Post-translationally, phosphorylated in vitro by aurora kinase. Phosphorylation is important for cell division.

It localises to the nucleus membrane. The protein resides in the cytoplasm. Its subcellular location is the cytoskeleton. The protein localises to the spindle. It is found in the nucleus envelope. It localises to the flagellum axoneme. The protein resides in the cell projection. Its subcellular location is the cilium. The protein localises to the flagellum. Involved in cell division. Involved in mitosis. Regulates dynamics of microtubules (MTs) during mitosis. Required for cytokinesis. Binds polymerized MTs in vitro. Is able to rescue a mitotic division defect, the proper positioning of the nucleus, of the S.cerevisiae BIM1 knockout mutant in a complementation assay. May play a role in spindle positioning and MT distribution. May be involved in MT nucleation for the formation of median bodies and in the biogenesis of flagella. Based on its localization to both the flagellar exit point and the distal flagellar tips, it may mediate the transition from anterograde to retrograde intraflagellar transport (IFT). This chain is End-binding protein 1, found in Giardia intestinalis (strain ATCC 50803 / WB clone C6) (Giardia lamblia).